The sequence spans 288 residues: 33 kDa chaperonin (288 aa).

2 disulfides stabilise this stretch: cysteine 236/cysteine 238 and cysteine 269/cysteine 272.

This sequence belongs to the HSP33 family. Under oxidizing conditions two disulfide bonds are formed involving the reactive cysteines. Under reducing conditions zinc is bound to the reactive cysteines and the protein is inactive.

The protein resides in the cytoplasm. Redox regulated molecular chaperone. Protects both thermally unfolding and oxidatively damaged proteins from irreversible aggregation. Plays an important role in the bacterial defense system toward oxidative stress. The polypeptide is 33 kDa chaperonin (Lactococcus lactis subsp. cremoris (strain SK11)).